A 281-amino-acid polypeptide reads, in one-letter code: Homoserine kinase (281 aa).

83-93 (PVSSGLGSSAA) is an ATP binding site.

This sequence belongs to the GHMP kinase family. Homoserine kinase subfamily.

The protein resides in the cytoplasm. The enzyme catalyses L-homoserine + ATP = O-phospho-L-homoserine + ADP + H(+). The protein operates within amino-acid biosynthesis; L-threonine biosynthesis; L-threonine from L-aspartate: step 4/5. Functionally, catalyzes the ATP-dependent phosphorylation of L-homoserine to L-homoserine phosphate. In Thermotoga petrophila (strain ATCC BAA-488 / DSM 13995 / JCM 10881 / RKU-1), this protein is Homoserine kinase.